The following is a 273-amino-acid chain: Giardin subunit beta (273 aa).

The segment at 1–19 (MSMFTSTRTLTQTMDKPDD) is nonhelical region. Positions 20 to 273 (LTRSATETAV…GGLSMVTKHQ (254 aa)) are rod. Coiled coils occupy residues 123 to 175 (DTLN…YDQL) and 211 to 263 (NTKL…SKIQ).

It belongs to the SF-assemblin family. Interacts with BOP1 (via C-terminal WD repeats).

The protein resides in the cytoplasm. Its subcellular location is the cytoskeleton. Functionally, giardins are involved in parasite attachment to the intestinal mucosa and in the cytoskeletal disassembly and reassembly that marks the transition from infectious trophozoite to transmissible cyst. They may interact with other cytoskeletal proteins such as microtubules in the microribbons or crossbridges, to maintain the integrity of the ventral disk. The polypeptide is Giardin subunit beta (Giardia intestinalis (Giardia lamblia)).